A 914-amino-acid chain; its full sequence is Translation initiation factor IF-2 (914 aa).

Disordered stretches follow at residues 246–271 and 293–313; these read EDGE…KKKG and SGMD…QRRM. Positions 249–266 are enriched in basic and acidic residues; the sequence is EAAKKKAAKPDGGEDVGV. The tr-type G domain maps to 411–581; that stretch reads TRPPVVTIMG…LAEAEIRELK (171 aa). Residues 420–427 are G1; sequence GHVDHGKT. A GTP-binding site is contributed by 420-427; it reads GHVDHGKT. The segment at 445-449 is G2; the sequence is GITQH. The G3 stretch occupies residues 467-470; the sequence is DTPG. Residues 467 to 471 and 521 to 524 each bind GTP; these read DTPGH and NKID. The G4 stretch occupies residues 521–524; that stretch reads NKID. The segment at 557–559 is G5; sequence SAK.

Belongs to the TRAFAC class translation factor GTPase superfamily. Classic translation factor GTPase family. IF-2 subfamily.

The protein resides in the cytoplasm. Its function is as follows. One of the essential components for the initiation of protein synthesis. Protects formylmethionyl-tRNA from spontaneous hydrolysis and promotes its binding to the 30S ribosomal subunits. Also involved in the hydrolysis of GTP during the formation of the 70S ribosomal complex. The protein is Translation initiation factor IF-2 of Chlorobaculum tepidum (strain ATCC 49652 / DSM 12025 / NBRC 103806 / TLS) (Chlorobium tepidum).